Here is a 176-residue protein sequence, read N- to C-terminus: dCTP deaminase (176 aa).

Residues 102-107 (RSTFAR) and Asp-118 each bind dCTP. The active-site Proton donor/acceptor is Glu-128. Residues Tyr-160, Lys-166, and Gln-167 each contribute to the dCTP site.

This sequence belongs to the dCTP deaminase family. As to quaternary structure, homotrimer.

It carries out the reaction dCTP + H2O + H(+) = dUTP + NH4(+). Its pathway is pyrimidine metabolism; dUMP biosynthesis; dUMP from dCTP (dUTP route): step 1/2. Catalyzes the deamination of dCTP to dUTP. This Staphylothermus marinus (strain ATCC 43588 / DSM 3639 / JCM 9404 / F1) protein is dCTP deaminase.